An 88-amino-acid chain; its full sequence is Acylphosphatase (88 aa).

The 86-residue stretch at 3-88 folds into the Acylphosphatase-like domain; sequence AARFIFTGVV…IPTTEAFVTG (86 aa). Residues R18 and N36 contribute to the active site.

The protein belongs to the acylphosphatase family.

It catalyses the reaction an acyl phosphate + H2O = a carboxylate + phosphate + H(+). The sequence is that of Acylphosphatase (acyP) from Xanthomonas campestris pv. campestris (strain 8004).